Reading from the N-terminus, the 355-residue chain is 3-dehydroquinate synthase (355 aa).

Residues 98-102, 122-123, lysine 135, lysine 144, and 162-165 contribute to the NAD(+) site; these read GVVGD, TT, and TLDT. Zn(2+) is bound by residues glutamate 177, histidine 240, and histidine 257.

It belongs to the sugar phosphate cyclases superfamily. Dehydroquinate synthase family. Co(2+) is required as a cofactor. Zn(2+) serves as cofactor. Requires NAD(+) as cofactor.

It localises to the cytoplasm. It carries out the reaction 7-phospho-2-dehydro-3-deoxy-D-arabino-heptonate = 3-dehydroquinate + phosphate. It functions in the pathway metabolic intermediate biosynthesis; chorismate biosynthesis; chorismate from D-erythrose 4-phosphate and phosphoenolpyruvate: step 2/7. Catalyzes the conversion of 3-deoxy-D-arabino-heptulosonate 7-phosphate (DAHP) to dehydroquinate (DHQ). This is 3-dehydroquinate synthase from Dictyoglomus turgidum (strain DSM 6724 / Z-1310).